A 254-amino-acid chain; its full sequence is 5'/3'-nucleotidase SurE (254 aa).

A divalent metal cation-binding residues include aspartate 9, aspartate 10, serine 40, and asparagine 93.

The protein belongs to the SurE nucleotidase family. Requires a divalent metal cation as cofactor.

It is found in the cytoplasm. The enzyme catalyses a ribonucleoside 5'-phosphate + H2O = a ribonucleoside + phosphate. It catalyses the reaction a ribonucleoside 3'-phosphate + H2O = a ribonucleoside + phosphate. The catalysed reaction is [phosphate](n) + H2O = [phosphate](n-1) + phosphate + H(+). Its function is as follows. Nucleotidase with a broad substrate specificity as it can dephosphorylate various ribo- and deoxyribonucleoside 5'-monophosphates and ribonucleoside 3'-monophosphates with highest affinity to 3'-AMP. Also hydrolyzes polyphosphate (exopolyphosphatase activity) with the preference for short-chain-length substrates (P20-25). Might be involved in the regulation of dNTP and NTP pools, and in the turnover of 3'-mononucleotides produced by numerous intracellular RNases (T1, T2, and F) during the degradation of various RNAs. This Photorhabdus laumondii subsp. laumondii (strain DSM 15139 / CIP 105565 / TT01) (Photorhabdus luminescens subsp. laumondii) protein is 5'/3'-nucleotidase SurE.